The chain runs to 155 residues: Small ribosomal subunit protein uS7 (155 aa).

Belongs to the universal ribosomal protein uS7 family. In terms of assembly, part of the 30S ribosomal subunit. Contacts proteins S9 and S11.

One of the primary rRNA binding proteins, it binds directly to 16S rRNA where it nucleates assembly of the head domain of the 30S subunit. Is located at the subunit interface close to the decoding center, probably blocks exit of the E-site tRNA. The polypeptide is Small ribosomal subunit protein uS7 (Xylella fastidiosa (strain 9a5c)).